The primary structure comprises 184 residues: ADP-ribosylation factor-like protein 2 (184 aa).

Residue Gly2 is the site of N-myristoyl glycine attachment. Residues 23-30 (GLDNAGKT), 66-70 (DVGGQ), Gly68, and 125-128 (NKSD) each bind GTP.

This sequence belongs to the small GTPase superfamily. Arf family. In the embryo, strongly expressed in migrating hypodermal cells. Shortly before the beginning of elongation, expressed in many developing neurons where it persists throughout adulthood. In the larva, highly expressed in migrating hypodermal cells and the uterus. Also expressed in vulva, spermatheca, sheath cells, distal tips cells and proctoderm of the male tail.

The protein localises to the cytoplasm. The protein resides in the cell membrane. Its subcellular location is the cytoskeleton. It is found in the microtubule organizing center. It localises to the centrosome. Its function is as follows. GTP-binding protein that functions in embryogenesis, cytokinesis, germline development and microtubulule cytoskeleton dynamics. This is ADP-ribosylation factor-like protein 2 (evl-20) from Caenorhabditis elegans.